The chain runs to 325 residues: NADH-quinone oxidoreductase subunit H (325 aa).

8 consecutive transmembrane segments (helical) span residues 11-31 (ILLT…CGAF), 81-101 (VIFT…FAIV), 114-134 (IGIL…LFAG), 154-174 (LSYE…AGSF), 186-206 (VWNV…GVAV), 237-257 (FFVG…TLFF), 265-285 (LPPF…FILI), and 304-324 (ICLP…LWQA).

The protein belongs to the complex I subunit 1 family. In terms of assembly, NDH-1 is composed of 13 different subunits. Subunits NuoA, H, J, K, L, M, N constitute the membrane sector of the complex.

The protein localises to the cell inner membrane. The catalysed reaction is a quinone + NADH + 5 H(+)(in) = a quinol + NAD(+) + 4 H(+)(out). In terms of biological role, NDH-1 shuttles electrons from NADH, via FMN and iron-sulfur (Fe-S) centers, to quinones in the respiratory chain. The immediate electron acceptor for the enzyme in this species is believed to be ubiquinone. Couples the redox reaction to proton translocation (for every two electrons transferred, four hydrogen ions are translocated across the cytoplasmic membrane), and thus conserves the redox energy in a proton gradient. This subunit may bind ubiquinone. The polypeptide is NADH-quinone oxidoreductase subunit H (Escherichia fergusonii (strain ATCC 35469 / DSM 13698 / CCUG 18766 / IAM 14443 / JCM 21226 / LMG 7866 / NBRC 102419 / NCTC 12128 / CDC 0568-73)).